A 304-amino-acid chain; its full sequence is Acetaldehyde dehydrogenase 1 (304 aa).

Cys131 (acyl-thioester intermediate) is an active-site residue. NAD(+)-binding positions include Ser162–Asn170 and Asn273.

Belongs to the acetaldehyde dehydrogenase family.

The catalysed reaction is acetaldehyde + NAD(+) + CoA = acetyl-CoA + NADH + H(+). This chain is Acetaldehyde dehydrogenase 1, found in Dechloromonas aromatica (strain RCB).